Consider the following 876-residue polypeptide: Inter-alpha-trypsin inhibitor heavy chain H3 (876 aa).

An N-terminal signal peptide occupies residues 1–18; sequence MVALSHLGSALQLGSLWG. Positions 19–31 are excised as a propeptide; sequence FPRSPFRLLGKRS. One can recognise a VIT domain in the interval 26–155; that stretch reads LLGKRSLPEG…KVTFELTYEE (130 aa). N-linked (GlcNAc...) asparagine glycosylation is present at asparagine 88. Positions 281-464 constitute a VWFA domain; sequence NVAFVIDISG…LQLQGFYEEV (184 aa). A glycan (N-linked (GlcNAc...) asparagine) is linked at asparagine 577. At aspartate 637 the chain carries Aspartate 1-(chondroitin 4-sulfate)-ester. A propeptide spanning residues 638–876 is cleaved from the precursor; sequence PHFIIQVPEK…HTDYIVPNLF (239 aa).

The protein belongs to the ITIH family. I-alpha-I plasma protease inhibitors are assembled from one or two heavy chains (HC) and one light chain, bikunin. Pre-alpha-inhibitor (P-alpha-I) is composed of ITIH3/HC3 and bikunin. In terms of processing, heavy chains are linked to bikunin via chondroitin 4-sulfate esterified to the alpha-carboxyl of the C-terminal aspartate after propeptide cleavage.

It localises to the secreted. Functionally, may act as a carrier of hyaluronan in serum or as a binding protein between hyaluronan and other matrix protein, including those on cell surfaces in tissues to regulate the localization, synthesis and degradation of hyaluronan which are essential to cells undergoing biological processes. The polypeptide is Inter-alpha-trypsin inhibitor heavy chain H3 (ITIH3) (Pongo abelii (Sumatran orangutan)).